Consider the following 212-residue polypeptide: Large ribosomal subunit protein uL3 (212 aa).

Q153 carries the N5-methylglutamine modification.

Belongs to the universal ribosomal protein uL3 family. Part of the 50S ribosomal subunit. Forms a cluster with proteins L14 and L19. Methylated by PrmB.

Its function is as follows. One of the primary rRNA binding proteins, it binds directly near the 3'-end of the 23S rRNA, where it nucleates assembly of the 50S subunit. The chain is Large ribosomal subunit protein uL3 from Acinetobacter baylyi (strain ATCC 33305 / BD413 / ADP1).